A 515-amino-acid chain; its full sequence is Cytochrome P450 monooxygenase mfmA (515 aa).

Residues 3-23 traverse the membrane as a helical segment; it reads KISIIPIVGVALSLAIILQLG. C453 contributes to the heme binding site.

This sequence belongs to the cytochrome P450 family. The cofactor is heme.

Its subcellular location is the membrane. It functions in the pathway secondary metabolite biosynthesis; terpenoid biosynthesis. Its function is as follows. Cytochrome P450 monooxygenase; part of the gene cluster that mediates the biosynthesis of the phthalide-terpenoid hybrid 11'-O-desmethylfendlerol. Within the pathway, mfma and mfmC act together to convert 3,5-dimethylorsellinic acid (DMOA) into the phthalide 5,7-dihydroxy-4-(hydroxymethyl)-6-methylphthalide. MfmA performs especially an hydroxylation at C-9. The biosynthesis of 11'-O-desmethylfendlerol begins with the NR-PKS mfmB that forms 3,5-dimethylorsellinic acid (DMOA), which is then transformed into the phthalide 5,7-dihydroxy-4-(hydroxymethyl)-6-methylphthalide by the cytochrome P450 monooxygenase mfmA and the hydrolase mfmC. Subsequently, the methyltransferase mfmE catalyzes 7-O-methylation to yield 5-hydroxy-4-(hydroxymethyl)-7-methoxy-6-methylphthalide, which undergoes C-3 hydroxylation by the cytochrome P450 monooxygenase mfmF. The resultant cyclopolic acid (2,5-dihydroxy-4-(hydroxymethyl)-7-methoxy-6-methylphthalide) is then farnesylated by the DMATS-type prenyltransferase mfmD to afford 5-O-farnesylcyclopolic acid. Finally, the Pyr4-family terpene cyclase mfmH cyclizes the farnesyl moiety of 5-O-farnesylcyclopolic acid into a drimane-like structure, thus completing the biosynthesis of 11'-O-desmethylfendlerol. This Annulohypoxylon moriforme (Filamentous fungus) protein is Cytochrome P450 monooxygenase mfmA.